We begin with the raw amino-acid sequence, 299 residues long: tRNA dimethylallyltransferase (299 aa).

13-20 contributes to the ATP binding site; the sequence is GPTASGKT. A substrate-binding site is contributed by 15 to 20; that stretch reads TASGKT. The interaction with substrate tRNA stretch occupies residues 38–41; it reads DSRQ.

The protein belongs to the IPP transferase family. Monomer. It depends on Mg(2+) as a cofactor.

It catalyses the reaction adenosine(37) in tRNA + dimethylallyl diphosphate = N(6)-dimethylallyladenosine(37) in tRNA + diphosphate. Its function is as follows. Catalyzes the transfer of a dimethylallyl group onto the adenine at position 37 in tRNAs that read codons beginning with uridine, leading to the formation of N6-(dimethylallyl)adenosine (i(6)A). The chain is tRNA dimethylallyltransferase from Prochlorococcus marinus (strain SARG / CCMP1375 / SS120).